The primary structure comprises 338 residues: MSSSAPSTSAPTKIVIPDLVSHCTIPVRCNRHWKQASVESKRWLFRGGNLSDRKRDAFHGLKAGYLTSMCYPLAGYPQLRVSCDFMNYLFHLDNISDEMNDRGTHGTAVSVLDALYQPHMHPTSRVGKMTKDYWVRLIQTASPGAQQRFIETFDMFFQAVTQQAMDRANGVIPDLESYIAIRRDTSGCKPCWALIEYANNLDLPWEIMDHPIIRGLGEAANDLVTWSNDIFSYNVEQSKGDTHNMIVVVQNQQGLDLQSAVNFVGDLCKQSIDRFHYLRENLPSWGPELDREVEIYVDGLADWITGSLKWSFESERYFGKAGLEVKKTRVVALLPRRA.

Mg(2+)-binding residues include aspartate 93, asparagine 228, serine 232, and glutamate 236. The DDXXD motif motif lies at aspartate 93–aspartate 97. An NSE/DTE motif motif is present at residues asparagine 228–glutamate 236. Arginine 316 and tyrosine 317 together coordinate (2E,6E)-farnesyl diphosphate.

This sequence belongs to the terpene synthase family. The cofactor is Mg(2+).

The catalysed reaction is (2E,6E)-farnesyl diphosphate = alpha-copaene + diphosphate. The enzyme catalyses (2E,6E)-farnesyl diphosphate = beta-copaene + diphosphate. It carries out the reaction (2E,6E)-farnesyl diphosphate = alpha-muurolene + diphosphate. It catalyses the reaction (2E,6E)-farnesyl diphosphate = gamma-muurolene + diphosphate. The catalysed reaction is (2E,6E)-farnesyl diphosphate = delta-cadinene + diphosphate. In terms of biological role, terpene cyclase that catalyzes the cyclization of farnesyl diphosphate (FPP) to various sesquiterpenes, including alpha-copaene, beta-copaene, beta-elemene, alpha-muurolene, gamma-muurolene and delta-cadinene. The protein is Sesquiterpene synthase 1 of Postia placenta (strain ATCC 44394 / Madison 698-R) (Brown rot fungus).